We begin with the raw amino-acid sequence, 545 residues long: Capsular polysaccharide phosphotransferase SacB (545 aa).

This sequence belongs to the stealth family.

Functionally, may be the polymerase that links individual UDP-N-acetyl-D-mannosamine monomers. In serotype A the capsule is composed of repeated units of (alpha 1-6)-linked N-acetyl-D-mannosamine-1-phosphate. The sequence is that of Capsular polysaccharide phosphotransferase SacB (sacB) from Neisseria meningitidis serogroup A.